Reading from the N-terminus, the 419-residue chain is UDP-N-acetylglucosamine 1-carboxyvinyltransferase (419 aa).

Residue 22–23 (KN) coordinates phosphoenolpyruvate. UDP-N-acetyl-alpha-D-glucosamine is bound at residue Arg95. Residue Cys119 is the Proton donor of the active site. The residue at position 119 (Cys119) is a 2-(S-cysteinyl)pyruvic acid O-phosphothioketal. UDP-N-acetyl-alpha-D-glucosamine-binding positions include 164–167 (KVSV), Asp308, and Ile330.

It belongs to the EPSP synthase family. MurA subfamily.

The protein resides in the cytoplasm. The enzyme catalyses phosphoenolpyruvate + UDP-N-acetyl-alpha-D-glucosamine = UDP-N-acetyl-3-O-(1-carboxyvinyl)-alpha-D-glucosamine + phosphate. It functions in the pathway cell wall biogenesis; peptidoglycan biosynthesis. Functionally, cell wall formation. Adds enolpyruvyl to UDP-N-acetylglucosamine. This chain is UDP-N-acetylglucosamine 1-carboxyvinyltransferase, found in Rickettsia prowazekii (strain Madrid E).